Reading from the N-terminus, the 430-residue chain is Citrate synthase (430 aa).

Catalysis depends on residues His-305 and Asp-363.

It belongs to the citrate synthase family. Homohexamer.

It carries out the reaction oxaloacetate + acetyl-CoA + H2O = citrate + CoA + H(+). It participates in carbohydrate metabolism; tricarboxylic acid cycle; isocitrate from oxaloacetate: step 1/2. With respect to regulation, allosterically inhibited by NADH. The chain is Citrate synthase (gltA) from Coxiella burnetii (strain RSA 493 / Nine Mile phase I).